Reading from the N-terminus, the 190-residue chain is Segregation and condensation protein B (190 aa).

The protein belongs to the ScpB family. As to quaternary structure, homodimer. Homodimerization may be required to stabilize the binding of ScpA to the Smc head domains. Component of a cohesin-like complex composed of ScpA, ScpB and the Smc homodimer, in which ScpA and ScpB bind to the head domain of Smc. The presence of the three proteins is required for the association of the complex with DNA.

Its subcellular location is the cytoplasm. In terms of biological role, participates in chromosomal partition during cell division. May act via the formation of a condensin-like complex containing Smc and ScpA that pull DNA away from mid-cell into both cell halves. This Bacillus cereus (strain G9842) protein is Segregation and condensation protein B.